The primary structure comprises 82 residues: RNA-binding protein Hfq (82 aa).

The Sm domain occupies 10 to 69; the sequence is DPFLNALRREHVPVSIYLVNGIKLQGQIESFDQYVVLLRNTVTQMVYKHAISTIVPGRAV.

Belongs to the Hfq family. As to quaternary structure, homohexamer.

In terms of biological role, RNA chaperone that binds small regulatory RNA (sRNAs) and mRNAs to facilitate mRNA translational regulation in response to envelope stress, environmental stress and changes in metabolite concentrations. Also binds with high specificity to tRNAs. The polypeptide is RNA-binding protein Hfq (Albidiferax ferrireducens (strain ATCC BAA-621 / DSM 15236 / T118) (Rhodoferax ferrireducens)).